The chain runs to 106 residues: Small ribosomal subunit protein bS18 (106 aa).

Residues methionine 1–serine 32 are disordered. Basic and acidic residues predominate over residues methionine 7 to glycine 21.

Belongs to the bacterial ribosomal protein bS18 family. In terms of assembly, part of the 30S ribosomal subunit. Forms a tight heterodimer with protein bS6.

Its function is as follows. Binds as a heterodimer with protein bS6 to the central domain of the 16S rRNA, where it helps stabilize the platform of the 30S subunit. This Magnetococcus marinus (strain ATCC BAA-1437 / JCM 17883 / MC-1) protein is Small ribosomal subunit protein bS18.